The primary structure comprises 1002 residues: Calcium-transporting ATPase sarcoplasmic/endoplasmic reticulum type (1002 aa).

Residues 1 to 48 are Cytoplasmic-facing; sequence MEDGHSKTVEQSLNFFGTDGERGLTLDQIKTNQAKYGPNELPTEEGKS. Residues 49-69 traverse the membrane as a helical segment; that stretch reads IWQLVLEQFDDLLVKILLLAA. Topologically, residues 70 to 89 are lumenal; that stretch reads IISFVLALFEEHEETFTAFV. The helical transmembrane segment at 90 to 110 threads the bilayer; sequence EPLVILLILIANAVVGVWQER. Residues 111 to 253 lie on the Cytoplasmic side of the membrane; the sequence is NAESAIEALK…EIKTPLQQKL (143 aa). The helical transmembrane segment at 254-273 threads the bilayer; sequence DEFGEQLSKVISVICVAVWA. The Lumenal segment spans residues 274-295; that stretch reads INIGHFNDPAHGGSWIKGAIYY. The helical transmembrane segment at 296–313 threads the bilayer; that stretch reads FKIAVALAVAAIPEGLPA. Ca(2+) contacts are provided by Val304, Ala305, Ile307, and Glu309. Residues 314-757 lie on the Cytoplasmic side of the membrane; it reads VITTCLALGT…EEGRAIYNNM (444 aa). Asp351 (4-aspartylphosphate intermediate) is an active-site residue. Mg(2+) contacts are provided by Asp703 and Asp707. The chain crosses the membrane as a helical span at residues 758–777; that stretch reads KQFIRYLISSNIGEVVSIFL. Residues Asn768 and Glu771 each coordinate Ca(2+). The Lumenal segment spans residues 778 to 787; it reads TAALGLPEAL. The chain crosses the membrane as a helical span at residues 788 to 808; that stretch reads IPVQLLWVNLVTDGLPATALG. Ca(2+) is bound by residues Asn796, Thr799, and Asp800. Residues 809 to 828 are Cytoplasmic-facing; sequence FNPPDLDIMDKPPRKADEGL. A helical membrane pass occupies residues 829 to 851; it reads ISGWLFFRYMAIGFYVGAATVGA. Residues 852 to 897 lie on the Lumenal side of the membrane; the sequence is AAWWFIASSEGPGLTYWQLTHHLSCLGGGDEFKGVDCKIFSDPKAM. A helical membrane pass occupies residues 898–917; sequence TMALSVLVTIEMLNAMNSLS. A Ca(2+)-binding site is contributed by Glu908. The Cytoplasmic portion of the chain corresponds to 918 to 930; that stretch reads ENQSLISMPPWCN. A helical membrane pass occupies residues 931–949; it reads LWLIGSMALSFTLHFVILY. Residues 950–964 are Lumenal-facing; it reads VDVLSTVFQVTPLSA. The helical transmembrane segment at 965–985 threads the bilayer; the sequence is EEWITVMKFSIPVVLLDETLK. Residues 986-1002 are Cytoplasmic-facing; that stretch reads FVARKIADVPDAVVDKW.

It belongs to the cation transport ATPase (P-type) (TC 3.A.3) family.

The protein resides in the endoplasmic reticulum membrane. It is found in the sarcoplasmic reticulum membrane. The catalysed reaction is Ca(2+)(in) + ATP + H2O = Ca(2+)(out) + ADP + phosphate + H(+). Functionally, this magnesium-dependent enzyme catalyzes the hydrolysis of ATP coupled with the transport of calcium. This chain is Calcium-transporting ATPase sarcoplasmic/endoplasmic reticulum type, found in Drosophila pseudoobscura pseudoobscura (Fruit fly).